The chain runs to 35 residues: MEALVYTFLLVSTLGIIFFAIFFREPPKIQTKKTK.

The helical transmembrane segment at 3–23 threads the bilayer; sequence ALVYTFLLVSTLGIIFFAIFF.

This sequence belongs to the PsbT family. As to quaternary structure, PSII is composed of 1 copy each of membrane proteins PsbA, PsbB, PsbC, PsbD, PsbE, PsbF, PsbH, PsbI, PsbJ, PsbK, PsbL, PsbM, PsbT, PsbY, PsbZ, Psb30/Ycf12, at least 3 peripheral proteins of the oxygen-evolving complex and a large number of cofactors. It forms dimeric complexes.

The protein localises to the plastid. The protein resides in the chloroplast thylakoid membrane. Found at the monomer-monomer interface of the photosystem II (PS II) dimer, plays a role in assembly and dimerization of PSII. PSII is a light-driven water plastoquinone oxidoreductase, using light energy to abstract electrons from H(2)O, generating a proton gradient subsequently used for ATP formation. This chain is Photosystem II reaction center protein T, found in Oenothera argillicola (Appalachian evening primrose).